The sequence spans 103 residues: Pyrimidine/purine nucleoside phosphorylase (103 aa).

It belongs to the nucleoside phosphorylase PpnP family.

The catalysed reaction is a purine D-ribonucleoside + phosphate = a purine nucleobase + alpha-D-ribose 1-phosphate. The enzyme catalyses adenosine + phosphate = alpha-D-ribose 1-phosphate + adenine. It catalyses the reaction cytidine + phosphate = cytosine + alpha-D-ribose 1-phosphate. It carries out the reaction guanosine + phosphate = alpha-D-ribose 1-phosphate + guanine. The catalysed reaction is inosine + phosphate = alpha-D-ribose 1-phosphate + hypoxanthine. The enzyme catalyses thymidine + phosphate = 2-deoxy-alpha-D-ribose 1-phosphate + thymine. It catalyses the reaction uridine + phosphate = alpha-D-ribose 1-phosphate + uracil. It carries out the reaction xanthosine + phosphate = alpha-D-ribose 1-phosphate + xanthine. In terms of biological role, catalyzes the phosphorolysis of diverse nucleosides, yielding D-ribose 1-phosphate and the respective free bases. Can use uridine, adenosine, guanosine, cytidine, thymidine, inosine and xanthosine as substrates. Also catalyzes the reverse reactions. This chain is Pyrimidine/purine nucleoside phosphorylase, found in Dechloromonas aromatica (strain RCB).